The sequence spans 59 residues: ATP synthase protein 8 (59 aa).

The chain crosses the membrane as a helical span at residues 7–23; the sequence is LSPPFLYFELIGHFQVE.

The protein belongs to the ATPase protein 8 family. F-type ATPases have 2 components, CF(1) - the catalytic core - and CF(0) - the membrane proton channel.

The protein localises to the mitochondrion membrane. Its function is as follows. Mitochondrial membrane ATP synthase (F(1)F(0) ATP synthase or Complex V) produces ATP from ADP in the presence of a proton gradient across the membrane which is generated by electron transport complexes of the respiratory chain. F-type ATPases consist of two structural domains, F(1) - containing the extramembraneous catalytic core and F(0) - containing the membrane proton channel, linked together by a central stalk and a peripheral stalk. During catalysis, ATP synthesis in the catalytic domain of F(1) is coupled via a rotary mechanism of the central stalk subunits to proton translocation. Part of the complex F(0) domain. Minor subunit located with subunit a in the membrane. The protein is ATP synthase protein 8 (MT-ATP8) of Oenothera berteroana (Bertero's evening primrose).